The chain runs to 141 residues: HTH-type transcriptional repressor NsrR (141 aa).

Residues 2–129 (QLTNFTDYGL…DNYTLADLVE (128 aa)) enclose the HTH rrf2-type domain. Residues 28–51 (ISEVTDVYGVSRNHMVKIINQLSR) constitute a DNA-binding region (H-T-H motif). Positions 91, 96, and 102 each coordinate [2Fe-2S] cluster.

Requires [2Fe-2S] cluster as cofactor.

Functionally, nitric oxide-sensitive repressor of genes involved in protecting the cell against nitrosative stress. May require iron for activity. The sequence is that of HTH-type transcriptional repressor NsrR from Shigella boydii serotype 18 (strain CDC 3083-94 / BS512).